A 113-amino-acid polypeptide reads, in one-letter code: U11-theraphotoxin-Hhn1l (113 aa).

The first 21 residues, 1–21 (MNTGRVTFLVVFLVAVSLGPA), serve as a signal peptide directing secretion. A propeptide spanning residues 22–74 (DKEENPMEMQEKTQQGKNYLNFGENLVVPKLEELKAKLVEKESKKSKNSRQKR) is cleaved from the precursor. Cystine bridges form between Cys82/Cys95 and Cys89/Cys110.

It belongs to the neurotoxin 14 (magi-1) family. 01 (HNTX-16) subfamily. As to expression, expressed by the venom gland.

It localises to the secreted. Probable ion channel inhibitor. This Cyriopagopus hainanus (Chinese bird spider) protein is U11-theraphotoxin-Hhn1l.